We begin with the raw amino-acid sequence, 180 residues long: Acireductone dioxygenase (180 aa).

4 residues coordinate Fe(2+): histidine 97, histidine 99, glutamate 103, and histidine 141. Positions 97, 99, 103, and 141 each coordinate Ni(2+).

The protein belongs to the acireductone dioxygenase (ARD) family. In terms of assembly, monomer. Fe(2+) serves as cofactor. It depends on Ni(2+) as a cofactor.

The enzyme catalyses 1,2-dihydroxy-5-(methylsulfanyl)pent-1-en-3-one + O2 = 3-(methylsulfanyl)propanoate + CO + formate + 2 H(+). The catalysed reaction is 1,2-dihydroxy-5-(methylsulfanyl)pent-1-en-3-one + O2 = 4-methylsulfanyl-2-oxobutanoate + formate + 2 H(+). The protein operates within amino-acid biosynthesis; L-methionine biosynthesis via salvage pathway; L-methionine from S-methyl-5-thio-alpha-D-ribose 1-phosphate: step 5/6. In terms of biological role, catalyzes 2 different reactions between oxygen and the acireductone 1,2-dihydroxy-3-keto-5-methylthiopentene (DHK-MTPene) depending upon the metal bound in the active site. Fe-containing acireductone dioxygenase (Fe-ARD) produces formate and 2-keto-4-methylthiobutyrate (KMTB), the alpha-ketoacid precursor of methionine in the methionine recycle pathway. Ni-containing acireductone dioxygenase (Ni-ARD) produces methylthiopropionate, carbon monoxide and formate, and does not lie on the methionine recycle pathway. The protein is Acireductone dioxygenase of Klebsiella pneumoniae subsp. pneumoniae (strain ATCC 700721 / MGH 78578).